Consider the following 883-residue polypeptide: Phosphoenolpyruvate carboxylase (883 aa).

Residues His-138 and Lys-546 contribute to the active site.

Belongs to the PEPCase type 1 family. It depends on Mg(2+) as a cofactor.

The catalysed reaction is oxaloacetate + phosphate = phosphoenolpyruvate + hydrogencarbonate. Forms oxaloacetate, a four-carbon dicarboxylic acid source for the tricarboxylic acid cycle. The chain is Phosphoenolpyruvate carboxylase from Salmonella schwarzengrund (strain CVM19633).